The following is a 670-amino-acid chain: Probable potassium transport system protein Kup (670 aa).

Positions 1–42 are disordered; sequence MSQIPSPNDPPPAGAVPTSGAPAGPSATPAPSPTAGFSLPEH. The span at 15–35 shows a compositional bias: low complexity; the sequence is AVPTSGAPAGPSATPAPSPTA. 12 helical membrane-spanning segments follow: residues 51–71, 91–111, 144–164, 180–200, 208–228, 254–274, 290–310, 322–342, 380–400, 406–426, 440–460, and 464–484; these read LAAL…TSPL, VLGV…FKYM, VLLM…IITP, PAME…LFLF, VGAV…VLGV, GWHG…GEAL, WLGL…ALLL, LLAP…AAIV, IYLP…VLGF, LASA…LLFH, AWPL…ANVV, and DGGW…STWK.

Belongs to the HAK/KUP transporter (TC 2.A.72) family.

The protein resides in the cell inner membrane. The catalysed reaction is K(+)(in) + H(+)(in) = K(+)(out) + H(+)(out). Its function is as follows. Transport of potassium into the cell. Likely operates as a K(+):H(+) symporter. This Anaeromyxobacter dehalogenans (strain 2CP-C) protein is Probable potassium transport system protein Kup.